Here is a 197-residue protein sequence, read N- to C-terminus: Stanniocalcin-2 (197 aa).

The tract at residues 1–20 (TDAXNPPEGPQDRGSQQKGR) is disordered.

It belongs to the stanniocalcin family. In terms of assembly, homodimer; disulfide-linked.

The protein localises to the secreted. Functionally, has an anti-hypocalcemic action on calcium and phosphate homeostasis. The protein is Stanniocalcin-2 (STC2) of Cavia porcellus (Guinea pig).